The following is a 159-amino-acid chain: Cytochrome c-type biogenesis protein CcmE (159 aa).

At 1–8 the chain is on the cytoplasmic side; it reads MNPRRKKR. A helical; Signal-anchor for type II membrane protein transmembrane segment spans residues 9–29; that stretch reads LLVIVAVLFGIGASIGLVLYA. At 30–159 the chain is on the periplasmic side; that stretch reads LQENINLFYT…KPKYNLDSGN (130 aa). H130 and Y134 together coordinate heme.

It belongs to the CcmE/CycJ family.

Its subcellular location is the cell inner membrane. Heme chaperone required for the biogenesis of c-type cytochromes. Transiently binds heme delivered by CcmC and transfers the heme to apo-cytochromes in a process facilitated by CcmF and CcmH. In Pseudoalteromonas translucida (strain TAC 125), this protein is Cytochrome c-type biogenesis protein CcmE.